The sequence spans 319 residues: MKISEIAKFLGIEYYGDDIEITALNSLNNASFSELSYCDGEKNSKKIASSGAGAILISKEFENLVSKDCVKLVVDNPHLSFALLSKLFAKPLISSEKKQSNIAKSAKIMPNVYIGENVQIADHVVIMAGAYIGDNVSIGEYTIIHPNAVIYNDTKIGKKCHLLANCVIGSDGFGYAHTKNGEHYKIYHNGNVILEDFVEVGACTTIDRAVFESTIIKQGTKIDNLVQVGHNCEIGENCLIVAQSGISGSSILGKNVTMGGQSATSGHLEIGDFATIAARGGVTKNLEGARVYGGFPIMLQKDWLKFQAKIITAFRDKHE.

Residue H230 is the Proton acceptor of the active site.

This sequence belongs to the transferase hexapeptide repeat family. LpxD subfamily. Homotrimer.

The catalysed reaction is a UDP-3-O-[(3R)-3-hydroxyacyl]-alpha-D-glucosamine + a (3R)-hydroxyacyl-[ACP] = a UDP-2-N,3-O-bis[(3R)-3-hydroxyacyl]-alpha-D-glucosamine + holo-[ACP] + H(+). The protein operates within bacterial outer membrane biogenesis; LPS lipid A biosynthesis. Functionally, catalyzes the N-acylation of UDP-3-O-acylglucosamine using 3-hydroxyacyl-ACP as the acyl donor. Is involved in the biosynthesis of lipid A, a phosphorylated glycolipid that anchors the lipopolysaccharide to the outer membrane of the cell. In Campylobacter lari (strain RM2100 / D67 / ATCC BAA-1060), this protein is UDP-3-O-acylglucosamine N-acyltransferase.